The sequence spans 440 residues: GTPase Obg (440 aa).

The Obg domain maps to serine 5–leucine 163. The region spanning alanine 164 to serine 338 is the OBG-type G domain. GTP contacts are provided by residues glycine 170–serine 177, phenylalanine 195–lysine 199, aspartate 217–glycine 220, serine 288–aspartate 291, and serine 319–valine 321. Residues serine 177 and threonine 197 each coordinate Mg(2+). In terms of domain architecture, OCT spans tyrosine 362–glutamine 440.

This sequence belongs to the TRAFAC class OBG-HflX-like GTPase superfamily. OBG GTPase family. As to quaternary structure, monomer. Mg(2+) is required as a cofactor.

The protein resides in the cytoplasm. Its function is as follows. An essential GTPase which binds GTP, GDP and possibly (p)ppGpp with moderate affinity, with high nucleotide exchange rates and a fairly low GTP hydrolysis rate. Plays a role in control of the cell cycle, stress response, ribosome biogenesis and in those bacteria that undergo differentiation, in morphogenesis control. This is GTPase Obg from Lactobacillus delbrueckii subsp. bulgaricus (strain ATCC BAA-365 / Lb-18).